We begin with the raw amino-acid sequence, 129 residues long: MAKGRGSASWSARAIVTLMAVSVLLLQADYVQAATYTVGDSGIWTFNAVGWPKGKHFRAGDVLVFNYNPRMHNVVKVDSGSYNNCKTPTGAKPYTSGKDRITLSKGQNFFICNFPNHCESDMKIAVTAV.

An N-terminal signal peptide occupies residues Met-1–Ala-33. In terms of domain architecture, Phytocyanin spans Ala-34–Val-129. 4 residues coordinate Cu cation: His-72, Cys-112, His-117, and Met-122. A disulfide bridge connects residues Cys-85 and Cys-118.

Expressed in the inflorescence and in the transmitting tract of the pistil. Detected in roots, stems, cauline leaves, cotyledons, hypocotyls, guard cells, pistils, sepals, stamen filaments and vascular bundles of roots but not of leaves. Not expressed in petals, anthers or pollen.

Its subcellular location is the secreted. The protein localises to the extracellular space. It localises to the extracellular matrix. Forms a concentration gradient along the pollen tube growth path, with a lower level in the stigma papilla cell wall and a higher level in the transmitting tract extracellular matix of the style. The chain is Basic blue protein (ARPN) from Arabidopsis thaliana (Mouse-ear cress).